A 153-amino-acid chain; its full sequence is MDNINTTIDICGAASGLPSPGDSNSKRLRHRKYLPQRWKCEPRGPARTETQRPQTLFWRPWLLKSHKPKTQAHPYARGLRENPQEQKPVEYNHPVRLFWPKSKLLDNTYQEAADLLRNFPVQATISLYNDSESDTDNEEDSSEEEQDSGFESE.

Residues 58 to 61 (WRPW) carry the WRPW motif; required for transcriptional repression and interaction with tle4 motif. The interval 93–128 (HPVRLFWPKSKLLDNTYQEAADLLRNFPVQATISLY) is ripply homology domain. The tract at residues 127 to 153 (LYNDSESDTDNEEDSSEEEQDSGFESE) is disordered. Positions 131–153 (SESDTDNEEDSSEEEQDSGFESE) are enriched in acidic residues.

Belongs to the ripply family. As to quaternary structure, interacts with tle4 and tbx6, and mediates interaction between these proteins. In terms of tissue distribution, expressed in the presomitic mesoderm (PSM) in the anterior halves of somitomeres S-I, S-II and S-III.

Its subcellular location is the nucleus. Its function is as follows. Required during somitogenesis for the formation of somite boundaries. Represses the expression of genes involved in somite segmentation by acting with the corepressor tle4 to down-regulate the transcriptional activity of tbx6. May act by regulating the activity of tle4. Represses transcription of delta2, thy1 and ripply2.2/bowline itself. The polypeptide is Protein ripply2.2 (ripply2.2) (Xenopus laevis (African clawed frog)).